Here is a 203-residue protein sequence, read N- to C-terminus: Short chain dehydrogenase/reductase dpmpH (203 aa).

The NADP(+) site is built by Asp23, Tyr77, and Lys81. The active-site Proton acceptor is Tyr77. Residue Lys81 is the Lowers pKa of active site Tyr of the active site.

It belongs to the short-chain dehydrogenases/reductases (SDR) family.

It participates in secondary metabolite biosynthesis; terpenoid biosynthesis. Its function is as follows. Short chain dehydrogenase/reductase; part of the gene cluster that mediates the biosynthesis of diterpenoid pyrones. The first step of the pathway is the synthesis of the alpha-pyrone moiety by the polyketide synthase dpmpA via condensation of one acetyl-CoA starter unit with 3 malonyl-CoA units and 2 methylations. The alpha-pyrone is then combined with geranylgeranyl pyrophosphate (GGPP) formed by the GGPP synthase dpmpD through the action of the prenyltransferase dpmpC to yield a linear alpha-pyrone diterpenoid. Subsequent steps in the diterpenoid pyrone biosynthetic pathway involve the decalin core formation, which is initiated by the epoxidation of the C10-C11 olefin by the FAD-dependent oxidoreductase dpmpE, and is followed by a cyclization cascade catalyzed by the terpene cyclase dpmpB. The short chain dehydrogenase/reductase dpmpG then oxidizes the 8S hydroxy group to a ketone and the short chain dehydrogenase/reductase dpmpH reduces the ketone to the 8R hydroxy group to yield higginsianin B. Higginsianin B is further methylated by the methyltransferase dpmpI to produce the intermediate named FDDP B. The cytochrome P450 monooxygenase dpmpJ then oxidizes the C-26 methyl to primary alcohol, producing the final diterpenoid pyrone with a C-26 primary alcohol on the gamma-pyrone moiety named FDDP C. The protein is Short chain dehydrogenase/reductase dpmpH of Macrophomina phaseolina (strain MS6) (Charcoal rot fungus).